A 217-amino-acid chain; its full sequence is Small ribosomal subunit protein uS3 (217 aa).

Residues 38–106 (IRKFLKKRLS…KVTLDIQEVR (69 aa)) form the KH type-2 domain.

This sequence belongs to the universal ribosomal protein uS3 family. Part of the 30S ribosomal subunit. Forms a tight complex with proteins S10 and S14.

Binds the lower part of the 30S subunit head. Binds mRNA in the 70S ribosome, positioning it for translation. This chain is Small ribosomal subunit protein uS3, found in Desulfotalea psychrophila (strain LSv54 / DSM 12343).